The chain runs to 395 residues: 1-deoxy-D-xylulose 5-phosphate reductoisomerase (395 aa).

Residues Thr10, Gly11, Ser12, Ile13, and Asn123 each contribute to the NADPH site. Lys124 contacts 1-deoxy-D-xylulose 5-phosphate. Glu125 serves as a coordination point for NADPH. Position 149 (Asp149) interacts with Mn(2+). Positions 150, 151, 185, and 208 each coordinate 1-deoxy-D-xylulose 5-phosphate. Glu151 lines the Mn(2+) pocket. Gly214 is an NADPH binding site. Positions 221, 226, 227, and 230 each coordinate 1-deoxy-D-xylulose 5-phosphate. Glu230 is a Mn(2+) binding site.

This sequence belongs to the DXR family. Requires Mg(2+) as cofactor. It depends on Mn(2+) as a cofactor.

The catalysed reaction is 2-C-methyl-D-erythritol 4-phosphate + NADP(+) = 1-deoxy-D-xylulose 5-phosphate + NADPH + H(+). The protein operates within isoprenoid biosynthesis; isopentenyl diphosphate biosynthesis via DXP pathway; isopentenyl diphosphate from 1-deoxy-D-xylulose 5-phosphate: step 1/6. Functionally, catalyzes the NADPH-dependent rearrangement and reduction of 1-deoxy-D-xylulose-5-phosphate (DXP) to 2-C-methyl-D-erythritol 4-phosphate (MEP). The polypeptide is 1-deoxy-D-xylulose 5-phosphate reductoisomerase (Shewanella sediminis (strain HAW-EB3)).